The sequence spans 224 residues: PKHD-type hydroxylase tll1907 (224 aa).

The 100-residue stretch at 77-176 (KIIGPLLFSR…RLVAVAWVQS (100 aa)) folds into the Fe2OG dioxygenase domain. Residues His-96, Asp-98, and His-157 each contribute to the Fe cation site. Arg-167 provides a ligand contact to 2-oxoglutarate.

Fe(2+) serves as cofactor. L-ascorbate is required as a cofactor.

This chain is PKHD-type hydroxylase tll1907, found in Thermosynechococcus vestitus (strain NIES-2133 / IAM M-273 / BP-1).